Reading from the N-terminus, the 527-residue chain is Aspartokinase (527 aa).

Thr333 carries the post-translational modification Phosphothreonine. An ACT domain is found at 442-527 (LVGKHMKQYI…RLEQLKRLGI (86 aa)).

Belongs to the aspartokinase family. In terms of assembly, homohexamer. Interacts with FPR1; the interaction is direct, plays a role in feedback inhibition of aspartokinase by threonine, and inhibited by tacrolimus and sirolimus.

The enzyme catalyses L-aspartate + ATP = 4-phospho-L-aspartate + ADP. It participates in amino-acid biosynthesis; L-methionine biosynthesis via de novo pathway; L-homoserine from L-aspartate: step 1/3. It functions in the pathway amino-acid biosynthesis; L-threonine biosynthesis; L-threonine from L-aspartate: step 1/5. With respect to regulation, allosterically inhibited by threonine. Functionally, phosphorylates aspartate, the first step in the biosynthesis of amino acids that derive from aspartate (the aspartate family of amino acids), including methioinine and threonine, the latter of which is a precursor to isoleucine. This Saccharomyces cerevisiae (strain ATCC 204508 / S288c) (Baker's yeast) protein is Aspartokinase (HOM3).